We begin with the raw amino-acid sequence, 198 residues long: Alpha1-proteinase inhibitor-degradation deficient protein 37 (198 aa).

Phosphoserine is present on serine 79.

Its subcellular location is the cytoplasm. Involved in ER-associated protein degradation (ERAD). The sequence is that of Alpha1-proteinase inhibitor-degradation deficient protein 37 (ADD37) from Saccharomyces cerevisiae (strain ATCC 204508 / S288c) (Baker's yeast).